Reading from the N-terminus, the 274-residue chain is Large ribosomal subunit protein uL2cy (274 aa).

Disordered regions lie at residues 1 to 20 (MAIHLYKTSTPSTRNGAVDS) and 224 to 274 (NPVD…RRSK).

It belongs to the universal ribosomal protein uL2 family. Part of the 50S ribosomal subunit.

The protein resides in the plastid. It localises to the chloroplast. This is Large ribosomal subunit protein uL2cy (rpl2-B) from Populus alba (White poplar).